Consider the following 931-residue polypeptide: Aftiphilin (931 aa).

The tract at residues 1–49 (MEPDIIRMYSSSPPPLDNGAEDDEEDEFGEFGGFSEVSPSGVGFVDFDT) is disordered. A compositionally biased stretch (acidic residues) spans 19–29 (GAEDDEEDEFG). Positions 28-31 (FGEF) match the WXXF motif 1 motif. Positions 33–45 (GFSEVSPSGVGFV) are enriched in low complexity. Ser-151 carries the phosphoserine modification. Polar residues predominate over residues 371–381 (SVKTSDVNEIG). Residues 371 to 454 (SVKTSDVNEI…PFVTSTQDSM (84 aa)) form a disordered region. Ser-395 carries the post-translational modification Phosphoserine. The short motif at 433 to 436 (FGDF) is the WXXF motif 2 element. The segment covering 439–454 (ANGTTPPFVTSTQDSM) has biased composition (polar residues). Residues 476–479 (FGEF) carry the WXXF motif 3 motif. 2 disordered regions span residues 494–561 (TESD…SSAG) and 599–636 (WQSQ…LQEP). Basic and acidic residues predominate over residues 516–530 (GGKDSKPDSKLKNGQ). A Phosphothreonine modification is found at Thr-613. A compositionally biased stretch (low complexity) spans 618–631 (SVSSAASKGAVASG). Positions 712–714 (YQW) match the CLTCL1/Clathrin-binding motif. Positions 821-825 (LLNLD) are clathrin-binding.

As to quaternary structure, self-associates. Interacts with GGA1 (via GAE domain). Interacts with GGA3 (via GAE domain), AP1G1 (via GAE domain) and AP1G2 (via GAE domain). Component of the aftiphilin/p200/gamma-synergin complex, at least composed of AFTPH/aftiphilin, HEATR5B/p200a and SYNRG/gamma-synergin, which plays a role in the AP1G1/AP-1-mediated protein trafficking from early to recycling endosomes. Within the complex interacts with HEATR5B/p200a and SYNRG/gamma-synergin; the interactions are direct. Interacts with AP1G1/AP-1; the interaction is required to recruit AFTPH/aftiphilin to the perinuclear region of the cell. Interacts with CLTCL1/Clathrin.

The protein localises to the cytoplasm. It localises to the perinuclear region. Its subcellular location is the cytoplasmic vesicle. It is found in the clathrin-coated vesicle. In terms of biological role, component of clathrin-coated vesicles. Component of the aftiphilin/p200/gamma-synergin complex, which plays roles in AP1G1/AP-1-mediated protein trafficking including the trafficking of transferrin from early to recycling endosomes, and the membrane trafficking of furin and the lysosomal enzyme cathepsin D between the trans-Golgi network (TGN) and endosomes. The polypeptide is Aftiphilin (Aftph) (Mus musculus (Mouse)).